The sequence spans 399 residues: MKRQEIDHIPFDLTVEILTRLPAKSLMKFKCVSKLWSSIIHNQSFIDSFYSISSTRPRFIVAFSNGSFPSDKEKRLFIFSSSHEGHESSSSVITNLDTTIPSLTVSNNLASRCISVNGFIACSLYTRFTICNPSTRQVIVLPILPSGRAPDMRSTCIGYDPVDDQFKALALISSCIPNKDSTVEHLVLTLKGDKKNYSWRQIQGNNNIPPYSPVTMRVCINGVVYYGAWTPRQSMNAVIVCFDVRSEKITFIKTPKDVVRWCNDSILMEYKGKLASIVRNRYSRFDTFDLWVLEDIEKQEWSKQTCEIPLSVWDSVENFNMSFPGINKFGEIILAPTCLSGYHLRSFYIFYYHVETKKIRRVRLEGIADDENFRRCYGIGSGQCNVFISPEHVETIRFL.

In terms of domain architecture, F-box spans 3 to 49; the sequence is RQEIDHIPFDLTVEILTRLPAKSLMKFKCVSKLWSSIIHNQSFIDSF.

This chain is F-box protein At1g30790, found in Arabidopsis thaliana (Mouse-ear cress).